A 274-amino-acid chain; its full sequence is 3-methyl-2-oxobutanoate hydroxymethyltransferase (274 aa).

Residues aspartate 49 and aspartate 88 each contribute to the Mg(2+) site. Residues 49–50, aspartate 88, and lysine 118 contribute to the 3-methyl-2-oxobutanoate site; that span reads DS. Glutamate 120 lines the Mg(2+) pocket. Catalysis depends on glutamate 187, which acts as the Proton acceptor.

This sequence belongs to the PanB family. In terms of assembly, homodecamer; pentamer of dimers. Mg(2+) is required as a cofactor.

Its subcellular location is the cytoplasm. The catalysed reaction is 3-methyl-2-oxobutanoate + (6R)-5,10-methylene-5,6,7,8-tetrahydrofolate + H2O = 2-dehydropantoate + (6S)-5,6,7,8-tetrahydrofolate. It participates in cofactor biosynthesis; (R)-pantothenate biosynthesis; (R)-pantoate from 3-methyl-2-oxobutanoate: step 1/2. Catalyzes the reversible reaction in which hydroxymethyl group from 5,10-methylenetetrahydrofolate is transferred onto alpha-ketoisovalerate to form ketopantoate. The polypeptide is 3-methyl-2-oxobutanoate hydroxymethyltransferase (Rhodopseudomonas palustris (strain BisB5)).